Reading from the N-terminus, the 158-residue chain is UPF0178 protein Rpal_2485 (158 aa).

The protein belongs to the UPF0178 family.

In Rhodopseudomonas palustris (strain TIE-1), this protein is UPF0178 protein Rpal_2485.